Here is a 1024-residue protein sequence, read N- to C-terminus: Error-prone DNA polymerase (1024 aa).

Belongs to the DNA polymerase type-C family. DnaE2 subfamily.

The protein resides in the cytoplasm. The enzyme catalyses DNA(n) + a 2'-deoxyribonucleoside 5'-triphosphate = DNA(n+1) + diphosphate. DNA polymerase involved in damage-induced mutagenesis and translesion synthesis (TLS). It is not the major replicative DNA polymerase. In Vibrio parahaemolyticus serotype O3:K6 (strain RIMD 2210633), this protein is Error-prone DNA polymerase.